The sequence spans 417 residues: Gamma-glutamyl phosphate reductase (417 aa).

The protein belongs to the gamma-glutamyl phosphate reductase family.

It is found in the cytoplasm. It carries out the reaction L-glutamate 5-semialdehyde + phosphate + NADP(+) = L-glutamyl 5-phosphate + NADPH + H(+). Its pathway is amino-acid biosynthesis; L-proline biosynthesis; L-glutamate 5-semialdehyde from L-glutamate: step 2/2. Its function is as follows. Catalyzes the NADPH-dependent reduction of L-glutamate 5-phosphate into L-glutamate 5-semialdehyde and phosphate. The product spontaneously undergoes cyclization to form 1-pyrroline-5-carboxylate. This chain is Gamma-glutamyl phosphate reductase, found in Shigella flexneri serotype 5b (strain 8401).